The chain runs to 72 residues: Exodeoxyribonuclease 7 small subunit (72 aa).

This sequence belongs to the XseB family. As to quaternary structure, heterooligomer composed of large and small subunits.

Its subcellular location is the cytoplasm. It catalyses the reaction Exonucleolytic cleavage in either 5'- to 3'- or 3'- to 5'-direction to yield nucleoside 5'-phosphates.. Its function is as follows. Bidirectionally degrades single-stranded DNA into large acid-insoluble oligonucleotides, which are then degraded further into small acid-soluble oligonucleotides. This chain is Exodeoxyribonuclease 7 small subunit, found in Chlamydia muridarum (strain MoPn / Nigg).